The primary structure comprises 305 residues: Putative S-adenosyl-L-methionine-dependent methyltransferase MAB_3787 (305 aa).

Residues D132 and 161–162 each bind S-adenosyl-L-methionine; that span reads DL.

It belongs to the UPF0677 family.

In terms of biological role, exhibits S-adenosyl-L-methionine-dependent methyltransferase activity. The sequence is that of Putative S-adenosyl-L-methionine-dependent methyltransferase MAB_3787 from Mycobacteroides abscessus (strain ATCC 19977 / DSM 44196 / CCUG 20993 / CIP 104536 / JCM 13569 / NCTC 13031 / TMC 1543 / L948) (Mycobacterium abscessus).